We begin with the raw amino-acid sequence, 139 residues long: Putative pre-16S rRNA nuclease (139 aa).

Belongs to the YqgF nuclease family.

Its subcellular location is the cytoplasm. Its function is as follows. Could be a nuclease involved in processing of the 5'-end of pre-16S rRNA. This Streptococcus uberis (strain ATCC BAA-854 / 0140J) protein is Putative pre-16S rRNA nuclease.